The chain runs to 250 residues: Ribosomal RNA small subunit methyltransferase J (250 aa).

Residues 101–102 (RD), 117–118 (ER), 153–154 (SS), and D171 contribute to the S-adenosyl-L-methionine site.

Belongs to the methyltransferase superfamily. RsmJ family.

The protein resides in the cytoplasm. It carries out the reaction guanosine(1516) in 16S rRNA + S-adenosyl-L-methionine = N(2)-methylguanosine(1516) in 16S rRNA + S-adenosyl-L-homocysteine + H(+). In terms of biological role, specifically methylates the guanosine in position 1516 of 16S rRNA. This chain is Ribosomal RNA small subunit methyltransferase J, found in Escherichia coli O81 (strain ED1a).